Consider the following 245-residue polypeptide: Uridylate kinase (245 aa).

15 to 18 (KLSG) contributes to the ATP binding site. The tract at residues 23–28 (GDEGFG) is involved in allosteric activation by GTP. G57 lines the UMP pocket. The ATP site is built by G58 and R62. UMP contacts are provided by residues D77 and 138 to 145 (TGNPFCTT). Positions 165, 171, and 174 each coordinate ATP.

Belongs to the UMP kinase family. In terms of assembly, homohexamer.

The protein resides in the cytoplasm. It catalyses the reaction UMP + ATP = UDP + ADP. It participates in pyrimidine metabolism; CTP biosynthesis via de novo pathway; UDP from UMP (UMPK route): step 1/1. With respect to regulation, allosterically activated by GTP. Inhibited by UTP. Its function is as follows. Catalyzes the reversible phosphorylation of UMP to UDP. The chain is Uridylate kinase from Shewanella sp. (strain W3-18-1).